Reading from the N-terminus, the 350-residue chain is UDP-3-O-acylglucosamine N-acyltransferase (350 aa).

Catalysis depends on His248, which acts as the Proton acceptor.

The protein belongs to the transferase hexapeptide repeat family. LpxD subfamily. As to quaternary structure, homotrimer.

It carries out the reaction a UDP-3-O-[(3R)-3-hydroxyacyl]-alpha-D-glucosamine + a (3R)-hydroxyacyl-[ACP] = a UDP-2-N,3-O-bis[(3R)-3-hydroxyacyl]-alpha-D-glucosamine + holo-[ACP] + H(+). The protein operates within bacterial outer membrane biogenesis; LPS lipid A biosynthesis. In terms of biological role, catalyzes the N-acylation of UDP-3-O-acylglucosamine using 3-hydroxyacyl-ACP as the acyl donor. Is involved in the biosynthesis of lipid A, a phosphorylated glycolipid that anchors the lipopolysaccharide to the outer membrane of the cell. The sequence is that of UDP-3-O-acylglucosamine N-acyltransferase from Nostoc punctiforme (strain ATCC 29133 / PCC 73102).